Here is a 966-residue protein sequence, read N- to C-terminus: MATANGAHLFNHYSSNSRFIHFTSRNTSSKLFLTKTSHFRRPKRCFHVNNTLSEKIHHPITEQGGESDLSSFAPDAASITSSIKYHAEFTPVFSPERFELPKAFFATAQSVRDSLLINWNATYDIYEKLNMKQAYYLSMEFLQGRALLNAIGNLELTGAFAEALKNLGHNLENVASQEPDAALGNGGLGRLASCFLDSLATLNYPAWGYGLRYKYGLFKQRITKDGQEEVAEDWLEIGSPWEVVRNDVSYPIKFYGKVSTGSDGKRYWIGGEDIKAVAYDVPIPGYKTRTTISLRLWSTQVPSADFDLSAFNAGEHTKACEAQANAEKICYILYPGDESEEGKILRLKQQYTLCSASLQDIISRFERRSGDRIKWEEFPEKVAVQMNDTHPTLCIPELMRILIDLKGLNWNEAWNITQRTVAYTNHTVLPEALEKWSYELMQKLLPRHVEIIEAIDEELVHEIVLKYGSMDLNKLEEKLTTMRILENFDLPSSVAELFIKPEISVDDDTETVEVHDKVEASDKVVTNDEDDTGKKTSVKIEAAAEKDIDKKTPVSPEPAVIPPKKVRMANLCVVGGHAVNGVAEIHSEIVKEEVFNDFYELWPEKFQNKTNGVTPRRWIRFCNPPLSAIITKWTGTEDWVLKTEKLAELQKFADNEDLQNEWREAKRSNKIKVVSFLKEKTGYSVVPDAMFDIQVKRIHEYKRQLLNIFGIVYRYKKMKEMTAAERKTNFVPRVCIFGGKAFATYVQAKRIVKFITDVGATINHDPEIGDLLKVVFVPDYNVSVAELLIPASDLSEHISTAGMEASGTSNMKFAMNGCIQIGTLDGANVEIREEVGEENFFLFGAQAHEIAGLRKERADGKFVPDERFEEVKEFVRSGAFGSYNYDDLIGSLEGNEGFGRADYFLVGKDFPSYIECQEKVDEAYRDQKRWTTMSILNTAGSYKFSSDRTIHEYAKDIWNIEAVEIA.

A chloroplast-targeting transit peptide spans 1 to 50 (MATANGAHLFNHYSSNSRFIHFTSRNTSSKLFLTKTSHFRRPKRCFHVNN). Lys-812 bears the N6-(pyridoxal phosphate)lysine mark.

Belongs to the glycogen phosphorylase family. The cofactor is pyridoxal 5'-phosphate. As to expression, tuber.

Its subcellular location is the plastid. It is found in the chloroplast. The protein resides in the amyloplast. It carries out the reaction [(1-&gt;4)-alpha-D-glucosyl](n) + phosphate = [(1-&gt;4)-alpha-D-glucosyl](n-1) + alpha-D-glucose 1-phosphate. Phosphorylase is an important allosteric enzyme in carbohydrate metabolism. Enzymes from different sources differ in their regulatory mechanisms and in their natural substrates. However, all known phosphorylases share catalytic and structural properties. This is Alpha-1,4 glucan phosphorylase L-1 isozyme, chloroplastic/amyloplastic from Solanum tuberosum (Potato).